Consider the following 147-residue polypeptide: Large ribosomal subunit protein uL13 (147 aa).

This sequence belongs to the universal ribosomal protein uL13 family. As to quaternary structure, part of the 50S ribosomal subunit.

Its function is as follows. This protein is one of the early assembly proteins of the 50S ribosomal subunit, although it is not seen to bind rRNA by itself. It is important during the early stages of 50S assembly. The protein is Large ribosomal subunit protein uL13 of Limosilactobacillus fermentum (strain NBRC 3956 / LMG 18251) (Lactobacillus fermentum).